The primary structure comprises 98 residues: NADH-ubiquinone oxidoreductase chain 4L (98 aa).

The next 3 helical transmembrane spans lie at 1–21 (MSLVHMNIALAFTVALLGLLM), 29–49 (SLLCLEGMMLTLFIMGTIMIL), and 61–81 (IILLVFAACEAAVGLSLLVMV).

It belongs to the complex I subunit 4L family. Core subunit of respiratory chain NADH dehydrogenase (Complex I) which is composed of 45 different subunits.

The protein resides in the mitochondrion inner membrane. The catalysed reaction is a ubiquinone + NADH + 5 H(+)(in) = a ubiquinol + NAD(+) + 4 H(+)(out). Core subunit of the mitochondrial membrane respiratory chain NADH dehydrogenase (Complex I) which catalyzes electron transfer from NADH through the respiratory chain, using ubiquinone as an electron acceptor. Part of the enzyme membrane arm which is embedded in the lipid bilayer and involved in proton translocation. This Sorex unguiculatus (Long-clawed shrew) protein is NADH-ubiquinone oxidoreductase chain 4L (MT-ND4L).